We begin with the raw amino-acid sequence, 365 residues long: Inositol 4-methyltransferase (365 aa).

Aspartate 232 contacts S-adenosyl-L-methionine. Catalysis depends on histidine 270, which acts as the Proton acceptor.

Belongs to the class I-like SAM-binding methyltransferase superfamily. Cation-independent O-methyltransferase family. Leaves and roots. The levels found in the leaves are 25 times greater than in the roots.

It carries out the reaction myo-inositol + S-adenosyl-L-methionine = 1D-4-O-methyl-myo-inositol + S-adenosyl-L-homocysteine + H(+). It functions in the pathway polyol metabolism; myo-inositol metabolism. Its function is as follows. Catalyzes the methylation of myo-inositol into ononitol (1D-4-O-methyl myo-inositol), the first step in the biosynthesis of the cyclic sugar pinitol which has osmoprotective properties. This is Inositol 4-methyltransferase (IMT1) from Mesembryanthemum crystallinum (Common ice plant).